Reading from the N-terminus, the 158-residue chain is Small ribosomal subunit protein uS7 (158 aa).

It belongs to the universal ribosomal protein uS7 family. As to quaternary structure, part of the 30S ribosomal subunit. Contacts proteins S9 and S11.

Its function is as follows. One of the primary rRNA binding proteins, it binds directly to 16S rRNA where it nucleates assembly of the head domain of the 30S subunit. Is located at the subunit interface close to the decoding center, probably blocks exit of the E-site tRNA. The protein is Small ribosomal subunit protein uS7 of Parabacteroides distasonis (strain ATCC 8503 / DSM 20701 / CIP 104284 / JCM 5825 / NCTC 11152).